A 585-amino-acid chain; its full sequence is Bestrophin-1 (585 aa).

Residues 1 to 31 lie on the Cytoplasmic side of the membrane; sequence MTITYTSQVANARLGSFSRLLLCWRGSIYKL. A10 contacts Ca(2+). The chain crosses the membrane as a helical span at residues 32 to 51; it reads LYGEFLIFLLCYYIIRFIYR. The Extracellular segment spans residues 52-60; the sequence is LALTEEQQL. The helical transmembrane segment at 61–82 threads the bilayer; that stretch reads MFEKLTLYCDSYIQLIPISFVL. The Cytoplasmic segment spans residues 83–237; it reads GFYVTLVVTR…DWISIPLVYT (155 aa). The helical transmembrane segment at 238–255 threads the bilayer; it reads QVVTVAVYSFFLTCLVGR. The Extracellular portion of the chain corresponds to 256–274; sequence QFLNPAKAYPGHELDLVVP. A helical transmembrane segment spans residues 275–288; it reads VFTFLQFFFYVGWL. The Cytoplasmic portion of the chain corresponds to 289–585; sequence KVAEQLINPF…ALENRDEAHS (297 aa). 4 residues coordinate Ca(2+): Q293, N296, D301, and D304. Residues 346 to 379 are auto-inhibitory segment; it reads PYTAASAQFRRASFMGSTFNISLNKEEMEFQPNQ.

Belongs to the anion channel-forming bestrophin (TC 1.A.46) family. Calcium-sensitive chloride channel subfamily. As to quaternary structure, interacts with YWHAG; this interaction promotes the ligand-gated L-glutamate channel activity leading to the positive regulation of NMDA glutamate receptor activity through the L-glutamate secretion. Predominantly expressed in the basolateral membrane of the retinal pigment epithelium.

The protein resides in the cell membrane. The protein localises to the basolateral cell membrane. The catalysed reaction is chloride(in) = chloride(out). The enzyme catalyses hydrogencarbonate(in) = hydrogencarbonate(out). It catalyses the reaction 4-aminobutanoate(in) = 4-aminobutanoate(out). It carries out the reaction L-glutamate(out) = L-glutamate(in). With respect to regulation, inactivated by sulfhydryl-reactive agents. Ligand-gated anion channel that allows the movement of anions across cell membranes when activated by calcium (Ca2+). Allows the movement of chloride and hydrogencarbonate. Found in a partially open conformation leading to significantly smaller chloride movement. Upon F2R/PAR-1 activation, the sequestered calcium is released into the cytosol of astrocytes, leading to the (Ca2+)-dependent release of L-glutamate into the synaptic cleft that targets the neuronal postsynaptic GRIN2A/NMDAR receptor resulting in the synaptic plasticity regulation. Upon activation of the norepinephrine-alpha-1 adrenergic receptor signaling pathway, transports as well D-serine than L-glutamate in a (Ca2+)-dependent manner, leading to activation of adjacent NMDAR receptors and therefore regulates the heterosynaptic long-term depression and metaplasticity during initial memory acquisition. Releases the 4-aminobutanoate neurotransmitter in a (Ca2+)-dependent manner, and participates in its tonic release from cerebellar glial cells. This chain is Bestrophin-1, found in Homo sapiens (Human).